Reading from the N-terminus, the 211-residue chain is Fucoxanthin-chlorophyll a-c binding protein F, chloroplastic (211 aa).

Residues 1–33 constitute a chloroplast transit peptide; that stretch reads AIACAAAPGLRGPSAFNGAALSTPAKSSSAMKM. 3 helical membrane-spanning segments follow: residues 75 to 95, 116 to 136, and 177 to 197; these read IAML…PGML, IPPG…LAVM, and GRAA…SNQP.

It belongs to the fucoxanthin chlorophyll protein family. In terms of assembly, the LHC complex of chromophytic algae is composed of fucoxanthin, chlorophyll A and C bound non-covalently by fucoxanthin chlorophyll proteins (FCPs). The ratio of pigments in this LHC is; fucoxanthin: chlorophyll C: chlorophyll A; (0.6-1): (0.1-0.3): (1).

It localises to the plastid. The protein resides in the chloroplast thylakoid membrane. In terms of biological role, the light-harvesting complex (LHC) functions as a light receptor, it captures and delivers excitation energy to photosystems with which it is closely associated. Energy is transferred from the carotenoid and chlorophyll C (or B) to chlorophyll A and the photosynthetic reaction centers where it is used to synthesize ATP and reducing power. This is Fucoxanthin-chlorophyll a-c binding protein F, chloroplastic (FCPF) from Macrocystis pyrifera (Giant kelp).